The following is a 152-amino-acid chain: Zinc finger SWIM domain-containing protein 7 (152 aa).

The SWIM-type zinc finger occupies 76 to 114 (YTCLASCHYCSCPAFSFSVLRKSDSLLCKHLLAIYLSQL).

It belongs to the SWS1 family. As to quaternary structure, interacts with RAD51D and XRCC3; involved in homologous recombination repair. Interacts with SWSAP1; they form a functional complex involved in homologous recombination repair and stabilize each other.

The protein localises to the nucleus. Involved in early stages of the homologous recombination repair (HRR) pathway of double-stranded DNA breaks arising during DNA replication or induced by DNA-damaging agents. Required for meiotic progression, hence for fertility. This chain is Zinc finger SWIM domain-containing protein 7 (Zswim7), found in Mus musculus (Mouse).